A 275-amino-acid chain; its full sequence is Ciliary microtubule inner protein 2B (275 aa).

Disordered regions lie at residues 62–84 (PPIRPPRSPEVPRESLPVRRGQE) and 125–169 (EKQG…SPYS). 2 stretches are compositionally biased toward basic and acidic residues: residues 71–84 (EVPRESLPVRRGQE) and 125–147 (EKQGSEELPKEAKGRKDTEKDQV).

Belongs to the CIMIP2 family. As to quaternary structure, microtubule inner protein component of sperm flagellar doublet microtubules. Expressed in airway epithelial cells.

The protein resides in the cytoplasm. Its subcellular location is the cytoskeleton. It is found in the cilium axoneme. The protein localises to the flagellum axoneme. Functionally, microtubule inner protein (MIP) part of the dynein-decorated doublet microtubules (DMTs) in cilia axoneme, which is required for motile cilia beating. The chain is Ciliary microtubule inner protein 2B from Homo sapiens (Human).